A 387-amino-acid chain; its full sequence is O-methyltransferase asqD (387 aa).

Asp252 provides a ligand contact to S-adenosyl-L-methionine. His294 serves as the catalytic Proton acceptor.

It belongs to the class I-like SAM-binding methyltransferase superfamily. Cation-independent O-methyltransferase family.

Its pathway is secondary metabolite biosynthesis. It participates in alkaloid biosynthesis. It functions in the pathway mycotoxin biosynthesis. In terms of biological role, O-methyltransferase; part of the gene cluster that mediates the biosynthesis of the aspoquinolone mycotoxins. The role of asqD within the aspoquinolone pathway has still to be determined. The first step of the pathway is catalyzed by the nonribosomal peptide synthetase asqK that condenses anthranilic acid and O-methyl-L-tyrosine to produce 4'-methoxycyclopeptin. 4'-methoxycyclopeptin is then converted to 4'-methoxydehydrocyclopeptin by the ketoglutarate-dependent dioxygenase asqJ. AsqJ also converts its first product 4'-methoxydehydrocyclopeptin to 4'-methoxycyclopenin. The following conversion of 4'-methoxycyclopenin into 4'-methoxyviridicatin is catalyzed by the cyclopenase asqI. 4'-methoxyviridicatin is the precursor of quinolone natural products, and is further converted to quinolinone B. The prenyltransferase asqH1 then catalyzes the canonical Friedel-Crafts alkylation of quinolinone B with dimethylallyl cation to yield dimethylallyl quinolone, which is subjected to FAD-dependent dehydrogenation by the FAD-linked oxidoreductase asqF to yield conjugated aryl diene. The delta(3') double bond then serves as the site of the second alkylation with DMAPP catalyzed by the prenyltransferase asqH2 to yield a carbenium ion intermediate, which can be attacked by H(2)O to yield a styrenyl quinolone containing a C3'-hydroxyprenyl chain. The FAD-dependent monooxygenase asqG performs epoxidation of the terminal C7'-C8' olefin. Finally, after dehydratation of the epoxide at C3 by asqC, the quinolone epoxide rearrangement protein asqO catalyzes an enzymatic 3-exo-tet cyclization to yield the cyclopropyl-THF ring system in aspoquinolone. The chain is O-methyltransferase asqD from Emericella nidulans (strain FGSC A4 / ATCC 38163 / CBS 112.46 / NRRL 194 / M139) (Aspergillus nidulans).